Consider the following 525-residue polypeptide: GMP synthase [glutamine-hydrolyzing] (525 aa).

The Glutamine amidotransferase type-1 domain maps to 9–207; sequence RILILDFGSQ…VRDICQCEAL (199 aa). The active-site Nucleophile is the Cys-86. Residues His-181 and Glu-183 contribute to the active site. Residues 208–400 form the GMPS ATP-PPase domain; the sequence is WTPAKIIDDA…LGLPYDMLYR (193 aa). 235 to 241 contacts ATP; the sequence is SGGVDSS.

Homodimer.

It catalyses the reaction XMP + L-glutamine + ATP + H2O = GMP + L-glutamate + AMP + diphosphate + 2 H(+). Its pathway is purine metabolism; GMP biosynthesis; GMP from XMP (L-Gln route): step 1/1. In terms of biological role, catalyzes the synthesis of GMP from XMP. In Shigella boydii serotype 4 (strain Sb227), this protein is GMP synthase [glutamine-hydrolyzing].